The following is a 968-amino-acid chain: Isoleucine--tRNA ligase (968 aa).

Positions 68-78 (PYANGALHMGH) match the 'HIGH' region motif. Glu-582 provides a ligand contact to L-isoleucyl-5'-AMP. The 'KMSKS' region motif lies at 623–627 (KMSKS). Residue Lys-626 participates in ATP binding. Zn(2+) contacts are provided by Cys-936, Cys-939, Cys-956, and Cys-959.

The protein belongs to the class-I aminoacyl-tRNA synthetase family. IleS type 1 subfamily. In terms of assembly, monomer. Requires Zn(2+) as cofactor.

It is found in the cytoplasm. The catalysed reaction is tRNA(Ile) + L-isoleucine + ATP = L-isoleucyl-tRNA(Ile) + AMP + diphosphate. In terms of biological role, catalyzes the attachment of isoleucine to tRNA(Ile). As IleRS can inadvertently accommodate and process structurally similar amino acids such as valine, to avoid such errors it has two additional distinct tRNA(Ile)-dependent editing activities. One activity is designated as 'pretransfer' editing and involves the hydrolysis of activated Val-AMP. The other activity is designated 'posttransfer' editing and involves deacylation of mischarged Val-tRNA(Ile). This chain is Isoleucine--tRNA ligase, found in Prochlorococcus marinus (strain MIT 9301).